The sequence spans 355 residues: Small ribosomal subunit protein uS2 (355 aa).

This sequence belongs to the universal ribosomal protein uS2 family.

The polypeptide is Small ribosomal subunit protein uS2 (Methylorubrum extorquens (strain CM4 / NCIMB 13688) (Methylobacterium extorquens)).